The primary structure comprises 151 residues: Large ribosomal subunit protein bL9 (151 aa).

This sequence belongs to the bacterial ribosomal protein bL9 family.

Functionally, binds to the 23S rRNA. The polypeptide is Large ribosomal subunit protein bL9 (Prochlorococcus marinus (strain AS9601)).